Here is a 248-residue protein sequence, read N- to C-terminus: 2,3-bisphosphoglycerate-dependent phosphoglycerate mutase (248 aa).

Substrate is bound by residues 7–14 (RHGESIWN), 20–21 (TG), R59, 86–89 (ERHY), K97, 113–114 (RR), and 182–183 (GN). Residue H8 is the Tele-phosphohistidine intermediate of the active site. E86 functions as the Proton donor/acceptor in the catalytic mechanism.

This sequence belongs to the phosphoglycerate mutase family. BPG-dependent PGAM subfamily.

The enzyme catalyses (2R)-2-phosphoglycerate = (2R)-3-phosphoglycerate. It functions in the pathway carbohydrate degradation; glycolysis; pyruvate from D-glyceraldehyde 3-phosphate: step 3/5. Its function is as follows. Catalyzes the interconversion of 2-phosphoglycerate and 3-phosphoglycerate. In Methylacidiphilum infernorum (isolate V4) (Methylokorus infernorum (strain V4)), this protein is 2,3-bisphosphoglycerate-dependent phosphoglycerate mutase.